We begin with the raw amino-acid sequence, 718 residues long: Phenylalanine--tRNA ligase beta subunit (718 aa).

In terms of domain architecture, tRNA-binding spans 40 to 153 (FLNVSKIKFG…KADLKQDPID (114 aa)). Residues 387–462 (DKKESFNFVW…RFYGYENLVF (76 aa)) enclose the B5 domain. Mg(2+) contacts are provided by D440, D446, E449, and E450.

This sequence belongs to the phenylalanyl-tRNA synthetase beta subunit family. Type 1 subfamily. As to quaternary structure, tetramer of two alpha and two beta subunits. Mg(2+) is required as a cofactor.

The protein resides in the cytoplasm. The catalysed reaction is tRNA(Phe) + L-phenylalanine + ATP = L-phenylalanyl-tRNA(Phe) + AMP + diphosphate + H(+). In Mycoplasmopsis pulmonis (strain UAB CTIP) (Mycoplasma pulmonis), this protein is Phenylalanine--tRNA ligase beta subunit.